The primary structure comprises 304 residues: N-acetylglucosaminyl-phosphatidylinositol de-N-acetylase (304 aa).

Residues 1–20 (MKMLRRTKVNFSKLLYKITK) lie on the Lumenal side of the membrane. A helical membrane pass occupies residues 21–38 (LAIVLTILYIYFTPKIVS). Residues 39–304 (RNNASLQHIF…FVNEFDVYTY (266 aa)) are Cytoplasmic-facing.

It belongs to the PIGL family.

It is found in the endoplasmic reticulum membrane. It carries out the reaction a 6-(N-acetyl-alpha-D-glucosaminyl)-1-(1,2-diacyl-sn-glycero-3-phospho)-1D-myo-inositol + H2O = a 6-(alpha-D-glucosaminyl)-1-(1,2-diacyl-sn-glycero-3-phospho)-1D-myo-inositol + acetate. Its pathway is glycolipid biosynthesis; glycosylphosphatidylinositol-anchor biosynthesis. Its function is as follows. Involved in the second step of GPI biosynthesis. De-N-acetylation of N-acetylglucosaminyl-phosphatidylinositol. This Saccharomyces cerevisiae (strain ATCC 204508 / S288c) (Baker's yeast) protein is N-acetylglucosaminyl-phosphatidylinositol de-N-acetylase (GPI12).